The chain runs to 443 residues: Tol-Pal system protein TolB (443 aa).

Positions 1–33 are cleaved as a signal peptide; sequence MKIGIINTKIRTVFSAFACMIAASLVCTMPARA.

The protein belongs to the TolB family. As to quaternary structure, the Tol-Pal system is composed of five core proteins: the inner membrane proteins TolA, TolQ and TolR, the periplasmic protein TolB and the outer membrane protein Pal. They form a network linking the inner and outer membranes and the peptidoglycan layer.

It localises to the periplasm. Part of the Tol-Pal system, which plays a role in outer membrane invagination during cell division and is important for maintaining outer membrane integrity. This Brucella anthropi (strain ATCC 49188 / DSM 6882 / CCUG 24695 / JCM 21032 / LMG 3331 / NBRC 15819 / NCTC 12168 / Alc 37) (Ochrobactrum anthropi) protein is Tol-Pal system protein TolB.